A 281-amino-acid chain; its full sequence is Feruloyl esterase A (281 aa).

Positions 1–21 (MKQFSAKYALILLATAGQALA) are cleaved as a signal peptide. Intrachain disulfides connect cysteine 50-cysteine 279, cysteine 112-cysteine 115, and cysteine 248-cysteine 255. Aspartate 98 lines the substrate pocket. N-linked (GlcNAc...) asparagine glycosylation is present at asparagine 100. Tyrosine 101 is a binding site for substrate. Serine 154 serves as the catalytic Nucleophile. Residue aspartate 215 is the Charge relay system of the active site. Histidine 268 is a binding site for substrate. Histidine 268 (charge relay system) is an active-site residue.

Post-translationally, glycosylated.

Its subcellular location is the secreted. It carries out the reaction feruloyl-polysaccharide + H2O = ferulate + polysaccharide.. With respect to regulation, inhibited by the specific serine esterase inhibitor diisopropylfluorophosphate. Involved in degradation of plant cell walls. Hydrolyzes the feruloyl-arabinose ester bond in arabinoxylans, and the feruloyl-galactose ester bond in pectin. Binds to cellulose. This is Feruloyl esterase A (faeA) from Aspergillus niger.